Reading from the N-terminus, the 196-residue chain is Pyridoxine/pyridoxamine 5'-phosphate oxidase (196 aa).

Lysine 49 lines the substrate pocket. FMN contacts are provided by lysine 66 and glutamine 88. Positions 106, 110, and 114 each coordinate substrate. FMN contacts are provided by residues glutamine 123 to serine 124 and tryptophan 168. Arginine 174 to histidine 176 contributes to the substrate binding site. Arginine 178 is a binding site for FMN.

This sequence belongs to the pyridoxamine 5'-phosphate oxidase family. In terms of assembly, homodimer. Requires FMN as cofactor.

It carries out the reaction pyridoxamine 5'-phosphate + O2 + H2O = pyridoxal 5'-phosphate + H2O2 + NH4(+). The enzyme catalyses pyridoxine 5'-phosphate + O2 = pyridoxal 5'-phosphate + H2O2. It functions in the pathway cofactor metabolism; pyridoxal 5'-phosphate salvage; pyridoxal 5'-phosphate from pyridoxamine 5'-phosphate: step 1/1. It participates in cofactor metabolism; pyridoxal 5'-phosphate salvage; pyridoxal 5'-phosphate from pyridoxine 5'-phosphate: step 1/1. In terms of biological role, catalyzes the oxidation of either pyridoxine 5'-phosphate (PNP) or pyridoxamine 5'-phosphate (PMP) into pyridoxal 5'-phosphate (PLP). The protein is Pyridoxine/pyridoxamine 5'-phosphate oxidase of Bdellovibrio bacteriovorus (strain ATCC 15356 / DSM 50701 / NCIMB 9529 / HD100).